The sequence spans 588 residues: UDP-N-acetylmuramate--L-alanine ligase (588 aa).

An ATP-binding site is contributed by 119-125; sequence GSHGKST. The span at 344–371 shows a compositional bias: low complexity; the sequence is VPAAAGAAAAPPVRRDPATAAAAATTAP. Positions 344–411 are disordered; sequence VPAAAGAAAA…APAAGPDHAA (68 aa). Over residues 372 to 381 the composition is skewed to pro residues; that stretch reads IGPPDSPPPT. The span at 382 to 411 shows a compositional bias: low complexity; it reads GIALPRAAPPAVDAPVAATPAPAAGPDHAA.

This sequence belongs to the MurCDEF family.

It is found in the cytoplasm. It carries out the reaction UDP-N-acetyl-alpha-D-muramate + L-alanine + ATP = UDP-N-acetyl-alpha-D-muramoyl-L-alanine + ADP + phosphate + H(+). It participates in cell wall biogenesis; peptidoglycan biosynthesis. Its function is as follows. Cell wall formation. The chain is UDP-N-acetylmuramate--L-alanine ligase from Frankia alni (strain DSM 45986 / CECT 9034 / ACN14a).